The sequence spans 139 residues: ATP synthase epsilon chain (139 aa).

This sequence belongs to the ATPase epsilon chain family. As to quaternary structure, F-type ATPases have 2 components, CF(1) - the catalytic core - and CF(0) - the membrane proton channel. CF(1) has five subunits: alpha(3), beta(3), gamma(1), delta(1), epsilon(1). CF(0) has three main subunits: a, b and c.

The protein resides in the cell inner membrane. Produces ATP from ADP in the presence of a proton gradient across the membrane. In Pseudomonas putida (strain GB-1), this protein is ATP synthase epsilon chain.